A 389-amino-acid chain; its full sequence is Transcription factor TGAL10 (389 aa).

The tract at residues 80 to 110 (DDQDNAAALQESPRHASDSFEQEASKPRDKI) is disordered. The segment covering 91-110 (SPRHASDSFEQEASKPRDKI) has biased composition (basic and acidic residues). Positions 107–151 (RDKIQRRLAQNREAARKSRLRKKAYIQNLETSRMKLAHLEQEITR) constitute a bZIP domain. A basic motif region spans residues 109–129 (KIQRRLAQNREAARKSRLRKK). The interval 135 to 149 (LETSRMKLAHLEQEI) is leucine-zipper. In terms of domain architecture, DOG1 spans 176-389 (VVTFEVEYAQ…LHVRRRAELG (214 aa)). Disordered stretches follow at residues 320-345 (TSCDASPPPPPPEEEEPSSSAAGDGG) and 370-389 (HRRSPPPTSHLHVRRRAELG). Basic residues predominate over residues 380–389 (LHVRRRAELG).

The protein belongs to the bZIP family.

The protein resides in the nucleus. Transcriptional regulator involved in defense response. In Oryza sativa subsp. japonica (Rice), this protein is Transcription factor TGAL10.